The sequence spans 1264 residues: P-type sodium-transporting ATPase4 (1264 aa).

The segment covering 1–12 (MSSQNNNKQGGQ) has biased composition (polar residues). Positions 1-102 (MSSQNNNKQG…INGEKNDDNN (102 aa)) are disordered. Composition is skewed to basic and acidic residues over residues 15 to 42 (NNKKDSDDIKPSVSKEDLINSLKNDELN) and 50 to 64 (NDMKKNENMNIKKNE). The next 8 helical transmembrane spans lie at 165–185 (VWLIFLSQYCSPVVLLLLVAA), 186–206 (VASLALNEVVEGVAIISIVTL), 359–379 (GLIGLIAIIVLVVIISLAVII), 393–413 (FVIIIIGVGFAVSSIPEGLPM), 923–943 (FVCFLLGTNIGEIIYLSVAIV), 1006–1026 (IFEALCVLLSLAFSLYICTGF), 1203–1223 (CSISATLTFLSTCIPGITSIL), and 1226–1246 (TCLLWWQYLLAIFWALLNLFL).

Belongs to the cation transport ATPase (P-type) (TC 3.A.3) family.

The protein resides in the cell membrane. It carries out the reaction Na(+)(in) + ATP + H2O = Na(+)(out) + ADP + phosphate + H(+). Its activity is regulated as follows. Inhibited by cipargamin and other spiroindolone compounds. Inhibited by 4-cyano-3-methylisoquinoline derivatives MB14 and MB10 but not RK18. Inhibited by (+)-SJ733, a dihydroisoquinolone compound. Functionally, sodium-exporting ATPase. Required for the extrusion of Na(+) from the intraerythrocytic parasites to maintain a low cytosolic concentration of Na(+). The polypeptide is P-type sodium-transporting ATPase4 (Plasmodium falciparum (isolate 3D7)).